The following is a 317-amino-acid chain: Acetyl-coenzyme A carboxylase carboxyl transferase subunit alpha (317 aa).

The CoA carboxyltransferase C-terminal domain maps to 37–292 (RLEKKAEKLR…RICLKKHLDD (256 aa)).

The protein belongs to the AccA family. Acetyl-CoA carboxylase is a heterohexamer composed of biotin carboxyl carrier protein (AccB), biotin carboxylase (AccC) and two subunits each of ACCase subunit alpha (AccA) and ACCase subunit beta (AccD).

The protein localises to the cytoplasm. The enzyme catalyses N(6)-carboxybiotinyl-L-lysyl-[protein] + acetyl-CoA = N(6)-biotinyl-L-lysyl-[protein] + malonyl-CoA. The protein operates within lipid metabolism; malonyl-CoA biosynthesis; malonyl-CoA from acetyl-CoA: step 1/1. Functionally, component of the acetyl coenzyme A carboxylase (ACC) complex. First, biotin carboxylase catalyzes the carboxylation of biotin on its carrier protein (BCCP) and then the CO(2) group is transferred by the carboxyltransferase to acetyl-CoA to form malonyl-CoA. The chain is Acetyl-coenzyme A carboxylase carboxyl transferase subunit alpha from Syntrophotalea carbinolica (strain DSM 2380 / NBRC 103641 / GraBd1) (Pelobacter carbinolicus).